The following is a 521-amino-acid chain: Manganese transporter pdt1 (521 aa).

Serine 42 is subject to Phosphoserine. Threonine 43 bears the Phosphothreonine mark. The next 12 helical transmembrane spans lie at 71 to 91, 104 to 124, 152 to 172, 179 to 199, 210 to 230, 233 to 253, 260 to 280, 325 to 345, 373 to 393, 417 to 437, 440 to 460, and 495 to 515; these read YCKFIGPGFLIAVAYIDPGNY, KLLFIVFLSNLFAVYLQSLCI, VLAEIAIIATDIAEVIGTAVA, IPLVAGVVITILDVLLVLIAW, IFETAVALLVLVVAISFAVVL, VHIGGAGTVFKGFLPSSTVFS, SIGILGATVMPHSLFLGSGLV, LFTFALFTNSSILIVAGAVFY, LFAVALLFSGMSAGYVCTIAG, IAIIPCLVVSAAVGQSGLNQV, ASQVCLSILLPFLTFPLVMFT, and IVTWAIWLFLTALNLLLIVWL.

This sequence belongs to the NRAMP family.

The protein resides in the endoplasmic reticulum membrane. Its function is as follows. Transports manganese ions into the cell. Regulates cell morphogenesis through control of manganese homeostasis. The sequence is that of Manganese transporter pdt1 (pdt1) from Schizosaccharomyces pombe (strain 972 / ATCC 24843) (Fission yeast).